We begin with the raw amino-acid sequence, 361 residues long: Rho-GTPase-activating protein 5 (361 aa).

The region spanning 52–245 is the Rho-GAP domain; that stretch reads IFLTRRDGEK…FLINHQGSFI (194 aa). The span at 306–323 shows a compositional bias: low complexity; the sequence is SSATYSNSPSSNFSNMKS. The segment at 306–345 is disordered; it reads SSATYSNSPSSNFSNMKSSEVDPGSPPRIKSRSYSLSRSS.

Its subcellular location is the membrane. GTPase-activating protein for Rho1. Has a role in the negative regulation of (1-3)beta-D-glucan synthase activity and cell integrity. This Schizosaccharomyces pombe (strain 972 / ATCC 24843) (Fission yeast) protein is Rho-GTPase-activating protein 5 (rga5).